Consider the following 3674-residue polypeptide: Dystrophin-1 (3674 aa).

Residues 1 to 25 (MLFSGASTAKPKKDEKKDKKSDRDP) are disordered. A compositionally biased stretch (basic and acidic residues) spans 11-25 (PKKDEKKDKKSDRDP). Residues 30–39 (QEWVFVRWAN) are actin-binding. One can recognise a Calponin-homology (CH) domain in the interval 129–234 (EKLSEAIKQW…YLMSLYLAMI (106 aa)). The interval 265–325 (SQPSTSSSSA…KSGKSKKARR (61 aa)) is disordered. Spectrin repeat units follow at residues 327–435 (EQLA…VLQQ), 436–541 (QIHL…KLDG), and 612–656 (CELV…TLVK). The segment covering 655–674 (VKSGKADVKQVQESQNEQKE) has biased composition (basic and acidic residues). 5 disordered regions span residues 655–689 (VKSGKADVKQVQESQNEQKEQPASSEGLSTDTEGE), 968–991 (NSQMSNETVEKAETRKAEMEEKRR), 1587–1606 (ASAEKAPAPELRDARLSSPS), 1796–1833 (LSATEKKPVETVKSTIPDRPEVPEEPEKSSPDRTSRSS), and 2387–2466 (MNDS…GSTG). Over residues 675 to 685 (QPASSEGLSTD) the composition is skewed to polar residues. Residues 975–991 (TVEKAETRKAEMEEKRR) are compositionally biased toward basic and acidic residues. A compositionally biased stretch (basic and acidic residues) spans 1796–1830 (LSATEKKPVETVKSTIPDRPEVPEEPEKSSPDRTS). Residues 2391–2411 (GGDTTESRSTVVEMTSVHTKQ) are compositionally biased toward polar residues. Spectrin repeat units lie at residues 2576-2673 (RNEM…VLEA), 2725-2789 (FKTL…RLEK), 2792-2905 (QEWE…RLKK), and 2926-3032 (QRLQ…AVRN). Positions 3047–3081 (QSVTLPWQRAISKSNLLPYYIEQTSEKTQWEHPVW) constitute a WW domain. Residues 3301–3357 (KHASKCNVCKMFPIIGIRYRCLTCFNCDLCQNCFFSQRTAKSHRTNHPMQEYCEKTT) form a ZZ-type zinc finger. Zn(2+) contacts are provided by C3306, C3309, C3321, C3324, C3330, C3333, H3343, and H3347. 2 disordered regions span residues 3481 to 3522 (STME…TQSQ) and 3568 to 3645 (KQQA…QMQN). The span at 3568–3579 (KQQAPLSTNSLL) shows a compositional bias: polar residues.

Component of the dystrophin glycoprotein complex (DGC). Interacts with dyb-1 and stn-1 to form the DGC. Interacts with stn-2. As to expression, expressed in body wall, head, pharyngeal and vulval muscles, from late embryogenesis to adulthood (at protein level).

It is found in the cell membrane. The protein localises to the sarcolemma. It localises to the cytoplasm. The protein resides in the cytoskeleton. In terms of biological role, plays a role in cholinergic transmission and as a functional partner of dystrobrevin (dyb-1), necessary for muscle maintenance. Required for neuronal positioning. May play a role in the localization of slo-1 near dense bodies in the muscle. The polypeptide is Dystrophin-1 (dys-1) (Caenorhabditis elegans).